The chain runs to 179 residues: Putative 5'(3')-deoxyribonucleotidase (179 aa).

The active-site Nucleophile is the Asp-9. Asp-9, Asp-11, and Asp-135 together coordinate Mg(2+). Asp-11 serves as the catalytic Proton donor.

Belongs to the 5'(3')-deoxyribonucleotidase family. Requires Mg(2+) as cofactor.

In terms of biological role, dephosphorylates the 5' and 2'(3')-phosphates of deoxyribonucleotides. The sequence is that of Putative 5'(3')-deoxyribonucleotidase from Staphylococcus epidermidis (strain ATCC 12228 / FDA PCI 1200).